A 188-amino-acid chain; its full sequence is Elongation factor P (188 aa).

N6-(3,6-diaminohexanoyl)-5-hydroxylysine is present on lysine 34.

The protein belongs to the elongation factor P family. Post-translationally, may be beta-lysylated on the epsilon-amino group of Lys-34 by the combined action of EpmA and EpmB, and then hydroxylated on the C5 position of the same residue by EpmC (if this protein is present). Lysylation is critical for the stimulatory effect of EF-P on peptide-bond formation. The lysylation moiety may extend toward the peptidyltransferase center and stabilize the terminal 3-CCA end of the tRNA. Hydroxylation of the C5 position on Lys-34 may allow additional potential stabilizing hydrogen-bond interactions with the P-tRNA.

Its subcellular location is the cytoplasm. It participates in protein biosynthesis; polypeptide chain elongation. Its function is as follows. Involved in peptide bond synthesis. Alleviates ribosome stalling that occurs when 3 or more consecutive Pro residues or the sequence PPG is present in a protein, possibly by augmenting the peptidyl transferase activity of the ribosome. Modification of Lys-34 is required for alleviation. The protein is Elongation factor P of Stenotrophomonas maltophilia (strain R551-3).